A 648-amino-acid polypeptide reads, in one-letter code: Transmembrane 9 superfamily member 8 (648 aa).

Positions 1 to 33 (MAMEFLRSSRRILESSGCAIALIFLLFIHGAHS) are cleaved as a signal peptide. Topologically, residues 34–285 (FYLPGVAPQD…YLLMSDNQIH (252 aa)) are lumenal. Residues 286 to 306 (WFSIVNSLMIVLFLSGMVAMI) form a helical membrane-spanning segment. The Cytoplasmic portion of the chain corresponds to 307–355 (MLRTLYRDISRYNELETQEEAQEETGWKLVHGDVFRLPTNSDLLCVYVG). The helical transmembrane segment at 356 to 376 (TGVQCLGMVFVTMIFAMLGFL) threads the bilayer. At 377–381 (SPSNR) the chain is on the lumenal side. The helical transmembrane segment at 382-402 (GGLMTAMLLLWVFMGLFAGYA) threads the bilayer. Topologically, residues 403–422 (SSRLYKMFKGTEWKRIAFRT) are cytoplasmic. A helical transmembrane segment spans residues 423 to 443 (AFLFPAVVSAIFFVLNALIWG). The Lumenal segment spans residues 444-455 (QKSSGAVPFGTM). A helical transmembrane segment spans residues 456–476 (FALIFLWFGISVPLVFVGGYI). Residues 477–506 (GFKKPAADDPVKTNKIPRQIPEQAWYMNPV) lie on the Cytoplasmic side of the membrane. Residues 507–527 (FSILIGGILPFGAVFIELFFI) form a helical membrane-spanning segment. Topologically, residues 528–538 (LTSIWLNQFYY) are lumenal. The helical transmembrane segment at 539 to 559 (IFGFLFLVFVILIVTCAEITV) threads the bilayer. Over 560–577 (VLCYFQLCSEDYLWWWRS) the chain is Cytoplasmic. Residues 578-598 (YLTSGSSALYLFLYATFYFFT) form a helical membrane-spanning segment. At 599-604 (KLQITK) the chain is on the lumenal side. Residues 605–625 (LVSAMLYFGYMLIASYAFFVL) form a helical membrane-spanning segment. At 626-648 (TGTIGFYACLWFTRLIYSSVKID) the chain is on the cytoplasmic side. The Endoplasmic reticulum export signal signature appears at 637–642 (FTRLIY). The short motif at 646–648 (KID) is the Golgi retention signal element.

This sequence belongs to the nonaspanin (TM9SF) (TC 9.A.2) family.

The protein resides in the endosome membrane. Its subcellular location is the golgi apparatus membrane. The protein is Transmembrane 9 superfamily member 8 of Arabidopsis thaliana (Mouse-ear cress).